The sequence spans 85 residues: Double gene block protein 2 (85 aa).

Topologically, residues 1–2 (MK) are lumenal. A helical membrane pass occupies residues 3-23 (VLLVTGVLGLLLLIKWKSQST). The Cytoplasmic portion of the chain corresponds to 24–36 (STSNQTCQCPTSP). The chain crosses the membrane as a helical span at residues 37–56 (WVIYAFYNSLSLVLLLCHLI). Residues 57–85 (PEIKPIHTSYNTHDSSKQQHISINTGNGK) are Lumenal-facing.

It belongs to the carmovirus double gene block protein 2 family.

It is found in the host endoplasmic reticulum membrane. Its function is as follows. Cell-to-cell movement function. The protein is Double gene block protein 2 of Turnip crinkle virus (TCV).